Consider the following 259-residue polypeptide: 3-methyl-2-oxobutanoate hydroxymethyltransferase (259 aa).

Mg(2+) contacts are provided by Asp-44 and Asp-83. 3-methyl-2-oxobutanoate is bound by residues 44 to 45 (DS), Asp-83, and Lys-112. Residue Glu-114 coordinates Mg(2+). The Proton acceptor role is filled by Glu-177.

This sequence belongs to the PanB family. In terms of assembly, homodecamer; pentamer of dimers. The cofactor is Mg(2+).

It localises to the cytoplasm. The enzyme catalyses 3-methyl-2-oxobutanoate + (6R)-5,10-methylene-5,6,7,8-tetrahydrofolate + H2O = 2-dehydropantoate + (6S)-5,6,7,8-tetrahydrofolate. The protein operates within cofactor biosynthesis; (R)-pantothenate biosynthesis; (R)-pantoate from 3-methyl-2-oxobutanoate: step 1/2. Catalyzes the reversible reaction in which hydroxymethyl group from 5,10-methylenetetrahydrofolate is transferred onto alpha-ketoisovalerate to form ketopantoate. This chain is 3-methyl-2-oxobutanoate hydroxymethyltransferase, found in Nitratiruptor sp. (strain SB155-2).